We begin with the raw amino-acid sequence, 336 residues long: Fructose-1,6-bisphosphatase class 1 (336 aa).

Mg(2+)-binding residues include Glu90, Asp112, Leu114, and Asp115. Substrate-binding positions include 115–118, Asn211, and Lys277; that span reads DGSS. Mg(2+) is bound at residue Glu283.

This sequence belongs to the FBPase class 1 family. As to quaternary structure, homotetramer. Mg(2+) serves as cofactor.

Its subcellular location is the cytoplasm. The enzyme catalyses beta-D-fructose 1,6-bisphosphate + H2O = beta-D-fructose 6-phosphate + phosphate. It functions in the pathway carbohydrate biosynthesis; gluconeogenesis. The chain is Fructose-1,6-bisphosphatase class 1 from Pseudomonas putida (strain ATCC 700007 / DSM 6899 / JCM 31910 / BCRC 17059 / LMG 24140 / F1).